We begin with the raw amino-acid sequence, 539 residues long: Acid-sensing ion channel 4 (539 aa).

Over 1–68 the chain is Cytoplasmic; it reads MPIEIVCKIK…GPGPHGLRRT (68 aa). A helical membrane pass occupies residues 69–89; the sequence is LWALALLTSLAAFLYQAAGLA. Topologically, residues 90–438 are extracellular; sequence RGYLTRPHLV…EQRAAYGLSA (349 aa). Cystine bridges form between Cys118/Cys202 and Cys180/Cys187. 2 N-linked (GlcNAc...) asparagine glycosylation sites follow: Asn191 and Asn243. Intrachain disulfides connect Cys296-Cys375, Cys318-Cys371, Cys322-Cys369, Cys331-Cys353, and Cys333-Cys345. Asn376 is a glycosylation site (N-linked (GlcNAc...) asparagine). The helical transmembrane segment at 439 to 459 threads the bilayer; sequence LLGDLGGQMGLFIGASILTLL. The short motif at 452–454 is the GAS motif; ion selectivity filter element; that stretch reads GAS. The Cytoplasmic portion of the chain corresponds to 460–539; it reads EILDYIYEVS…PGGLFEDFAC (80 aa). The interval 501-531 is disordered; the sequence is EQSPCPSRGRVEGGGVSSLLPNHHHPHGPPG.

It belongs to the amiloride-sensitive sodium channel (TC 1.A.6) family. ASIC4 subfamily. Homotrimer. Heterotrimer; with other ASIC proteins producing functional channels. Expressed in pituitary gland. Weakly expressed in brain, vestibular system and organ of Corti.

The protein localises to the cell membrane. Its function is as follows. Does not exhibit measurable stand-alone pH-gated sodium channel activity but may form pH-gated heterotrimeric sodium channels. Its activity could also depend on alternative gating mechanisms. The chain is Acid-sensing ion channel 4 from Homo sapiens (Human).